Reading from the N-terminus, the 657-residue chain is Translation factor GUF1, mitochondrial (657 aa).

The N-terminal 39 residues, 1-39, are a transit peptide targeting the mitochondrion; that stretch reads MRGCLQSVKWLTSALRPSQSLASSTRYPRRLLSTSAPRN. The tr-type G domain maps to 59 to 239; sequence ERFRNFCIVA…TVIEQIPAPV (181 aa). GTP-binding positions include 68 to 75, 132 to 136, and 186 to 189; these read AHVDHGKS, DTPGH, and NKVD.

It belongs to the TRAFAC class translation factor GTPase superfamily. Classic translation factor GTPase family. LepA subfamily.

Its subcellular location is the mitochondrion inner membrane. It catalyses the reaction GTP + H2O = GDP + phosphate + H(+). Functionally, promotes mitochondrial protein synthesis. May act as a fidelity factor of the translation reaction, by catalyzing a one-codon backward translocation of tRNAs on improperly translocated ribosomes. Binds to mitochondrial ribosomes in a GTP-dependent manner. The polypeptide is Translation factor GUF1, mitochondrial (Ajellomyces capsulatus (strain G186AR / H82 / ATCC MYA-2454 / RMSCC 2432) (Darling's disease fungus)).